The chain runs to 514 residues: Putative fumarate hydratase class I (514 aa).

Residues Cys-62, Cys-187, and Cys-274 each coordinate [4Fe-4S] cluster.

The protein belongs to the class-I fumarase family. Homodimer. [4Fe-4S] cluster is required as a cofactor.

The catalysed reaction is (S)-malate = fumarate + H2O. It participates in carbohydrate metabolism; tricarboxylic acid cycle; (S)-malate from fumarate: step 1/1. In terms of biological role, catalyzes the reversible hydration of fumarate to (S)-malate. The protein is Putative fumarate hydratase class I (fumA) of Geobacillus stearothermophilus (Bacillus stearothermophilus).